The following is a 1025-amino-acid chain: DNA repair protein RAD5 (1025 aa).

The span at 1 to 12 shows a compositional bias: basic and acidic residues; sequence MEPRQKKARFFD. Disordered stretches follow at residues 1–49, 93–133, and 314–336; these read MEPR…PAPS, QQAT…VHTR, and RAKS…SEPI. 2 stretches are compositionally biased toward polar residues: residues 37–49 and 113–127; these read ASNS…PAPS and GFET…TQVP. Positions 317 to 328 are enriched in low complexity; sequence SQPPSSQPPSQN. One can recognise a Helicase ATP-binding domain in the interval 427 to 607; it reads PKQERSFSGG…FSILKFLGAA (181 aa). 440–447 lines the ATP pocket; sequence DEMGLGKT. The short motif at 558–561 is the DEAH box element; it reads DEAH. The RING-type zinc finger occupies 782-826; it reads CPICAEDVTKLAISKCLHMGCVDCLADNVRFQESKKQTPVCCICR. The Helicase C-terminal domain maps to 860 to 1012; that stretch reads KLVALVSKLK…TLGMSEQEQK (153 aa).

It belongs to the SNF2/RAD54 helicase family.

The protein resides in the cytoplasm. The protein localises to the nucleus. Probable helicase, member of the UBC2/RAD6 epistasis group. Functions with DNA repair protein RAD18 in error-free postreplication DNA repair. Involved in the maintenance of wild-type rates of instability of simple repetitive sequences such as poly(GT) repeats. Seems to be involved in maintaining a balance which acts in favor of error-prone non-homologous joining during DNA double-strand breaks repairs. The polypeptide is DNA repair protein RAD5 (RAD5) (Yarrowia lipolytica (strain CLIB 122 / E 150) (Yeast)).